The chain runs to 154 residues: Telokin (154 aa).

Positions 1-24 (ISGMSGRKASGSSPTSPINANKVE) are disordered. Residues 10–19 (SGSSPTSPIN) show a composition bias toward polar residues. In terms of domain architecture, Ig-like C2-type spans 42–133 (PYFTKTILDM…ATCTAELLVE (92 aa)). Positions 134–154 (TMGKEGEGEGEGEEDEEEEEE) are disordered. The span at 141–154 (GEGEGEEDEEEEEE) shows a compositional bias: acidic residues.

Belongs to the protein kinase superfamily. CAMK Ser/Thr protein kinase family. As to quaternary structure, binds calmodulin.

In terms of biological role, corresponds to the C-terminus of smooth muscle myosin light chain kinase. In Meleagris gallopavo (Wild turkey), this protein is Telokin.